A 128-amino-acid polypeptide reads, in one-letter code: Holo-[acyl-carrier-protein] synthase (128 aa).

Mg(2+) is bound by residues D8 and E60.

Belongs to the P-Pant transferase superfamily. AcpS family. The cofactor is Mg(2+).

Its subcellular location is the cytoplasm. It carries out the reaction apo-[ACP] + CoA = holo-[ACP] + adenosine 3',5'-bisphosphate + H(+). Its function is as follows. Transfers the 4'-phosphopantetheine moiety from coenzyme A to a Ser of acyl-carrier-protein. The chain is Holo-[acyl-carrier-protein] synthase from Anaeromyxobacter sp. (strain K).